Consider the following 1238-residue polypeptide: uncharacterized protein (1238 aa).

Disordered stretches follow at residues 1-38 (MSSK…DISS), 122-156 (SSTP…RPSF), 229-439 (PKNN…KNKE), 660-1016 (KNKL…TGAA), 1051-1083 (EEED…KLNS), and 1098-1191 (KKSG…NASR). Low complexity-rich tracts occupy residues 10-26 (NKNN…NNNN), 129-149 (LSPF…QSPL), and 234-276 (QIDS…TQSQ). Over residues 317 to 343 (ELQNQTQINKSKQDLTNISQKINITTS) the composition is skewed to polar residues. Basic and acidic residues predominate over residues 344 to 361 (QHDKDDLGEYRMSEKGGG). Over residues 362–372 (DDGDDDDDYDN) the composition is skewed to acidic residues. Positions 383-394 (TNKKQQQQHHHK) are enriched in basic residues. The segment covering 395 to 416 (GKEESQSEYYEKEKEKEKEDIA) has biased composition (basic and acidic residues). Low complexity-rich tracts occupy residues 417-435 (TTRA…NNIN), 678-691 (QQQQ…QQQE), and 712-792 (QPSQ…QEKQ). Basic and acidic residues predominate over residues 793–805 (QSQEKHQSQEKHQ). 2 stretches are compositionally biased toward low complexity: residues 806-859 (SQQS…SQQK) and 882-906 (SQSQ…QSQR). A compositionally biased stretch (acidic residues) spans 916–927 (ENQDSENLDDTV). Residues 929–944 (MNYNQIPSTLDHSTLQ) are compositionally biased toward polar residues. Residues 966–975 (EIERRRRELA) are compositionally biased toward basic and acidic residues. A compositionally biased stretch (acidic residues) spans 976-990 (GEDSDEEFEILDEDQ). 2 stretches are compositionally biased toward low complexity: residues 1062–1083 (QNNN…KLNS) and 1108–1121 (SSSS…NKKN). Residues 1123-1133 (PQPTKSVNKPR) show a composition bias toward polar residues. Over residues 1142-1181 (SQNRQKQSEQQQQQPQQQPQLPQQQQQQQQQQQLRQQQNE) the composition is skewed to low complexity. Polar residues predominate over residues 1182–1191 (NTISSLNASR).

This is an uncharacterized protein from Dictyostelium discoideum (Social amoeba).